A 492-amino-acid polypeptide reads, in one-letter code: Tyrosinase-like protein 1 (492 aa).

An N-terminal signal peptide occupies residues 1 to 22 (MDKMRTLQSLIVKLTLLYGALC). His147, His155, His164, His289, His293, and His316 together coordinate Cu cation. Positions 472 to 492 (SEPPLQLEGPSFTSSFDDPRI) are disordered. A compositionally biased stretch (polar residues) spans 482 to 492 (SFTSSFDDPRI).

The cofactor is Cu(2+). In terms of tissue distribution, prismatic layer of shell (at protein level). Expressed primarily in the mantle with highest level in the mantle edge and lower level in the mantle pallium.

It is found in the secreted. This Margaritifera margaritifera (Freshwater pearl mussel) protein is Tyrosinase-like protein 1.